Reading from the N-terminus, the 504-residue chain is Hydroxyisobutyraldehyde dehydrogenase (504 aa).

The Proton acceptor role is filled by E260. C294 serves as the catalytic Nucleophile.

It belongs to the aldehyde dehydrogenase family.

It is found in the cytoplasm. It carries out the reaction 2-hydroxy-2-methylpropanal + NAD(+) + H2O = 2-hydroxy-2-methylpropanoate + NADH + 2 H(+). Involved in the degradation of methyl tert-butyl ether (MTBE). Catalyzes the conversion of hydroxyisobutyraldehyde to hydroxyisobutyric acid (HIBA). This Mycolicibacterium austroafricanum (Mycobacterium austroafricanum) protein is Hydroxyisobutyraldehyde dehydrogenase.